Here is a 326-residue protein sequence, read N- to C-terminus: tRNA-modifying protein YgfZ (326 aa).

The folate site is built by Trp27 and Trp189.

It belongs to the tRNA-modifying YgfZ family.

It is found in the cytoplasm. Its function is as follows. Folate-binding protein involved in regulating the level of ATP-DnaA and in the modification of some tRNAs. It is probably a key factor in regulatory networks that act via tRNA modification, such as initiation of chromosomal replication. This is tRNA-modifying protein YgfZ from Escherichia coli O45:K1 (strain S88 / ExPEC).